Reading from the N-terminus, the 561-residue chain is ATP-dependent RNA helicase MRH4, mitochondrial (561 aa).

The transit peptide at 1–26 (MSLFFKPVISPQWSFPVLLKIGVRSY) directs the protein to the mitochondrion. The segment at 29–72 (GPRTKHKGNSPLASVPTGSSNKNRKQKAKGKKGNKKNDPDQAFN) is disordered. Basic residues predominate over residues 50 to 62 (KNRKQKAKGKKGN). The Q motif motif lies at 98–129 (SNFDQLLILPPVRDAVKEIISKESLKLQDSRK). The region spanning 131 to 319 (TSENIIPSPI…NINHLIFCSA (189 aa)) is the Helicase ATP-binding domain. Position 144–151 (144–151 (AIKRISKN)) interacts with ATP. The short motif at 267–270 (SIRM) is the DEAD box element. The Helicase C-terminal domain occupies 350–539 (ALDFKVINSA…KQGGRVFMLT (190 aa)).

This sequence belongs to the DEAD box helicase family. MRH4 subfamily.

It is found in the mitochondrion. It carries out the reaction ATP + H2O = ADP + phosphate + H(+). In terms of biological role, ATP-binding RNA helicase involved in mitochondrial RNA metabolism. Required for maintenance of mitochondrial DNA. In Saccharomyces cerevisiae (strain YJM789) (Baker's yeast), this protein is ATP-dependent RNA helicase MRH4, mitochondrial (MRH4).